The following is a 214-amino-acid chain: Thiamine import ATP-binding protein ThiQ (214 aa).

In terms of domain architecture, ABC transporter spans 2–212 (IKLNTIFDYP…KNGQATEREI (211 aa)). Residue 31–38 (GESGAGKS) participates in ATP binding.

This sequence belongs to the ABC transporter superfamily. Thiamine importer (TC 3.A.1.19.1) family. In terms of assembly, the complex is composed of two ATP-binding proteins (ThiQ), two transmembrane proteins (ThiP) and a solute-binding protein (ThiB).

It localises to the cell inner membrane. The catalysed reaction is thiamine(out) + ATP + H2O = thiamine(in) + ADP + phosphate + H(+). In terms of biological role, part of the ABC transporter complex ThiBPQ involved in thiamine import. Responsible for energy coupling to the transport system. The sequence is that of Thiamine import ATP-binding protein ThiQ from Histophilus somni (strain 129Pt) (Haemophilus somnus).